A 367-amino-acid chain; its full sequence is Heat-inducible transcription repressor HrcA (367 aa).

The protein belongs to the HrcA family.

Functionally, negative regulator of class I heat shock genes (grpE-dnaK-dnaJ and groELS operons). Prevents heat-shock induction of these operons. The polypeptide is Heat-inducible transcription repressor HrcA (Acaryochloris marina (strain MBIC 11017)).